The primary structure comprises 382 residues: Myb-like transcription factor (382 aa).

3 Myb-like domains span residues 1–57 (MPRS…RWSK), 58–108 (ITGA…QHCL), and 109–160 (DPSL…ITLF). Positions 194–210 (MSMDASEDGDDAEDDQT) are enriched in acidic residues. The segment at 194 to 240 (MSMDASEDGDDAEDDQTPDSYTSISTSSFDDILGGSSSSPSAADTMT) is disordered. The span at 211 to 240 (PDSYTSISTSSFDDILGGSSSSPSAADTMT) shows a compositional bias: polar residues.

Its subcellular location is the nucleus. In terms of biological role, transcription factor; part of the gene cluster that mediates the biosynthesis of 1233A, a natural compound known as an inhibitor of HMG-CoA synthase in the mevalonate pathway and with antibacterial and antifungal activities. Involved in hygromycin B-induced transcriptional control of the cluster. The polypeptide is Myb-like transcription factor (Fusarium sp).